The sequence spans 419 residues: DNA polymerase IV (419 aa).

One can recognise a UmuC domain in the interval 12–193 (IFHIDMNCFY…MSVEEMYGIG (182 aa)). Asp-16 and Asp-112 together coordinate Mg(2+). Residue Glu-113 is part of the active site. A disordered region spans residues 388-419 (IITSQKNKNESQENQQPRTSFQKDFLDDYKKP).

The protein belongs to the DNA polymerase type-Y family. Monomer. Requires Mg(2+) as cofactor.

It is found in the cytoplasm. The enzyme catalyses DNA(n) + a 2'-deoxyribonucleoside 5'-triphosphate = DNA(n+1) + diphosphate. Poorly processive, error-prone DNA polymerase involved in untargeted mutagenesis. Copies undamaged DNA at stalled replication forks, which arise in vivo from mismatched or misaligned primer ends. These misaligned primers can be extended by PolIV. Exhibits no 3'-5' exonuclease (proofreading) activity. May be involved in translesional synthesis, in conjunction with the beta clamp from PolIII. The polypeptide is DNA polymerase IV (Oceanobacillus iheyensis (strain DSM 14371 / CIP 107618 / JCM 11309 / KCTC 3954 / HTE831)).